A 297-amino-acid chain; its full sequence is Eukaryotic translation initiation factor 3 subunit G (297 aa).

A compositionally biased stretch (basic and acidic residues) spans 1 to 10 (MAAVQQKHDW). The interval 1-35 (MAAVQQKHDWADDDELEETSTELPPPQKITNKDGS) is disordered. The segment covering 11-20 (ADDDELEETS) has biased composition (acidic residues). Residues 217–295 (ATLRVTNVSE…LILRVEFAKK (79 aa)) form the RRM domain.

This sequence belongs to the eIF-3 subunit G family. In terms of assembly, component of the eukaryotic translation initiation factor 3 (eIF-3) complex.

The protein resides in the cytoplasm. Functionally, RNA-binding component of the eukaryotic translation initiation factor 3 (eIF-3) complex, which is involved in protein synthesis of a specialized repertoire of mRNAs and, together with other initiation factors, stimulates binding of mRNA and methionyl-tRNAi to the 40S ribosome. The eIF-3 complex specifically targets and initiates translation of a subset of mRNAs involved in cell proliferation. This subunit can bind 18S rRNA. This Neurospora crassa (strain ATCC 24698 / 74-OR23-1A / CBS 708.71 / DSM 1257 / FGSC 987) protein is Eukaryotic translation initiation factor 3 subunit G (eif3g).